A 409-amino-acid chain; its full sequence is Argininosuccinate synthase (409 aa).

ATP-binding positions include 12 to 20 and Ala39; that span reads AYSGGLDTS. L-citrulline contacts are provided by Tyr90 and Ser95. Position 120 (Gly120) interacts with ATP. 3 residues coordinate L-aspartate: Thr122, Asn126, and Asp127. Asn126 contacts L-citrulline. 5 residues coordinate L-citrulline: Arg130, Ser181, Ser190, Glu266, and Tyr278.

Belongs to the argininosuccinate synthase family. Type 1 subfamily. In terms of assembly, homotetramer.

Its subcellular location is the cytoplasm. It carries out the reaction L-citrulline + L-aspartate + ATP = 2-(N(omega)-L-arginino)succinate + AMP + diphosphate + H(+). The protein operates within amino-acid biosynthesis; L-arginine biosynthesis; L-arginine from L-ornithine and carbamoyl phosphate: step 2/3. The protein is Argininosuccinate synthase of Gluconacetobacter diazotrophicus (strain ATCC 49037 / DSM 5601 / CCUG 37298 / CIP 103539 / LMG 7603 / PAl5).